The sequence spans 459 residues: Vacuolar cation/proton exchanger 3 (459 aa).

Topologically, residues 1–67 are cytoplasmic; sequence MGSIVEPWAA…TLKNILSNLQ (67 aa). A helical membrane pass occupies residues 68–88; the sequence is EVILGTKLTLLFLAIPLAILA. Topologically, residues 89–95 are extracellular; that stretch reads NSYNYGR. The chain crosses the membrane as a helical span at residues 96–116; the sequence is PLIFGLSLIGLTPLAERVSFL. Over 117 to 129 the chain is Cytoplasmic; that stretch reads TEQLAFYTGPTVG. Residues 130 to 150 form a helical membrane-spanning segment; it reads GLLNATCGNATELIIAILALA. The interval 137–172 is cation selection; the sequence is GNATELIIAILALANNKVAVVKYSLLGSILSNLLLV. The Extracellular portion of the chain corresponds to 151-161; that stretch reads NNKVAVVKYSL. A helical membrane pass occupies residues 162–182; it reads LGSILSNLLLVLGTSLFFGGI. The Cytoplasmic segment spans residues 183–195; the sequence is ANIRREQRFDRKQ. A helical membrane pass occupies residues 196 to 216; sequence ADVNFFLLLMGLLCHLLPLLL. Residues 217-238 are Extracellular-facing; that stretch reads KYAATGEVSTSMINKMSLTLSR. The chain crosses the membrane as a helical span at residues 239–259; that stretch reads TSSIVMLIAYIAYLIFQLWTH. Topologically, residues 260–283 are cytoplasmic; it reads RQLFEAQQDDDDAYDDEVSVEETP. The chain crosses the membrane as a helical span at residues 284–304; that stretch reads VIGFWSGFAWLVGMTIVIALL. Residues 305–327 lie on the Extracellular side of the membrane; it reads SEYVVDTIEDASDSWGLSVSFIS. Residues 328–348 traverse the membrane as a helical segment; that stretch reads IILLPIVGNAAEHAGAIIFAF. A cation selection region spans residues 335 to 370; that stretch reads GNAAEHAGAIIFAFKNKLDISLGVALGSATQISLFV. The Cytoplasmic portion of the chain corresponds to 349 to 362; it reads KNKLDISLGVALGS. A helical transmembrane segment spans residues 363–383; it reads ATQISLFVVPLSVIVAWILGI. At 384–386 the chain is on the extracellular side; it reads KMD. The chain crosses the membrane as a helical span at residues 387 to 407; the sequence is LNFNILETSSLALAIIITAFT. Residues 408-417 are Cytoplasmic-facing; it reads LQDGTSHYMK. Residues 418–438 form a helical membrane-spanning segment; sequence GLVLLLCYVIIAACFFVDQIP. Residues 439–459 lie on the Extracellular side of the membrane; the sequence is QPNDLDVGLQPMNNLGEVFSA.

Belongs to the Ca(2+):cation antiporter (CaCA) (TC 2.A.19) family. Cation/proton exchanger (CAX) subfamily. As to expression, expressed in roots, stems and flowers.

It localises to the vacuole membrane. Its activity is regulated as follows. Inhibited by excess of Ca(2+). Functionally, vacuolar cation/proton exchanger (CAX). Translocates Ca(2+) and other metal ions into vacuoles using the proton gradient formed by H(+)-ATPase and H(+)-pyrophosphatase. Involved in ion homeostasis in association with CAX1. This is Vacuolar cation/proton exchanger 3 (CAX3) from Arabidopsis thaliana (Mouse-ear cress).